Consider the following 666-residue polypeptide: L-aspartate N-monooxygenase (nitrosuccinate-forming) (666 aa).

A disordered region spans residues 645-666 (LPAYEDPGVRCPSDDRLTEVTA). Residues 656 to 666 (PSDDRLTEVTA) show a composition bias toward basic and acidic residues.

Belongs to the nitrosuccinic acid synthase family. Requires FAD as cofactor.

The enzyme catalyses L-aspartate + 3 NADPH + 3 O2 + 2 H(+) = 2-nitrobutanedioate + 3 NADP(+) + 4 H2O. It functions in the pathway antibiotic biosynthesis. Part of a gene cluster involved in the biosynthesis of cremeomycin, a light-sensitive o-diazoquinone with antibacterial and antiproliferative effects. Catalyzes the iterative oxidation of L-aspartic acid to nitrosuccinic acid (2-nitrobutanedioate) via N-hydroxyaspartic acid and nitrososuccinic acid. The protein is L-aspartate N-monooxygenase (nitrosuccinate-forming) of Streptomyces cremeus.